Reading from the N-terminus, the 288-residue chain is ATP synthase gamma chain (288 aa).

The protein belongs to the ATPase gamma chain family. F-type ATPases have 2 components, CF(1) - the catalytic core - and CF(0) - the membrane proton channel. CF(1) has five subunits: alpha(3), beta(3), gamma(1), delta(1), epsilon(1). CF(0) has three main subunits: a, b and c.

It localises to the cell membrane. Functionally, produces ATP from ADP in the presence of a proton gradient across the membrane. The gamma chain is believed to be important in regulating ATPase activity and the flow of protons through the CF(0) complex. In Staphylococcus epidermidis (strain ATCC 35984 / DSM 28319 / BCRC 17069 / CCUG 31568 / BM 3577 / RP62A), this protein is ATP synthase gamma chain.